The chain runs to 810 residues: Janus kinase and microtubule-interacting protein 2 (810 aa).

Coiled coils occupy residues 13–102, 148–178, and 207–244; these read EALI…EMSR, ERLK…QADK, and RRLM…KEAL. Basic and acidic residues predominate over residues 261-274; it reads PKREIPGRAGDGSE. 2 disordered regions span residues 261–280 and 437–465; these read PKRE…SSPD and YDED…DDDL. A coiled-coil region spans residues 280–419; it reads DLRRNQKRIA…REKLIRRRKH (140 aa). Coiled coils occupy residues 468–597 and 664–808; these read SLAA…RERR and EKWI…SNRK.

This sequence belongs to the JAKMIP family. As to expression, highly expressed in brain, moderately expressed in thymus, spleen and lung, and weakly expressed in kidney, liver and peripheral blood lymphocytes. Also expressed in adrenal and pituitary glands, as well as testis.

Its subcellular location is the golgi apparatus. The sequence is that of Janus kinase and microtubule-interacting protein 2 (JAKMIP2) from Homo sapiens (Human).